Consider the following 382-residue polypeptide: UBP1-associated proteins 1B (382 aa).

The segment at 1 to 99 (MAKEGEERKK…SDESEEIVDS (99 aa)) is disordered. Residues 10–22 (KEKKEKKERKERK) are compositionally biased toward basic residues. The span at 23–34 (RREAEELAVREK) shows a compositional bias: basic and acidic residues. In terms of domain architecture, RRM spans 163-248 (RNIFVRGLGW…RPFNSGKPRE (86 aa)).

Its subcellular location is the nucleus. Its function is as follows. Acts as a component of a complex regulating the turnover of mRNAs in the nucleus. Binds with high affinity to RNA molecules that contain U-rich sequences in 3'-UTRs. May function in complex with UBP1 and contribute to the stabilization of mRNAs in the nucleus. The polypeptide is UBP1-associated proteins 1B (UBA1B) (Arabidopsis thaliana (Mouse-ear cress)).